The sequence spans 804 residues: Phenylalanine--tRNA ligase beta subunit (804 aa).

The tRNA-binding domain maps to 40–155 (DRGMKGVVIG…SDAPIGADAI (116 aa)). In terms of domain architecture, B5 spans 409 to 484 (QDSVVVTVTL…RLYGYDRLPA (76 aa)). Mg(2+)-binding residues include Asp-462, Asp-468, Glu-471, and Glu-472. An FDX-ACB domain is found at 710 to 803 (PRFPSVVRDI…VEKQFGAVLR (94 aa)).

The protein belongs to the phenylalanyl-tRNA synthetase beta subunit family. Type 1 subfamily. Tetramer of two alpha and two beta subunits. It depends on Mg(2+) as a cofactor.

The protein localises to the cytoplasm. The enzyme catalyses tRNA(Phe) + L-phenylalanine + ATP = L-phenylalanyl-tRNA(Phe) + AMP + diphosphate + H(+). This is Phenylalanine--tRNA ligase beta subunit from Geobacillus kaustophilus (strain HTA426).